The chain runs to 505 residues: Flagellin (505 aa).

It belongs to the bacterial flagellin family.

It is found in the secreted. Its subcellular location is the bacterial flagellum. Functionally, flagellin is the subunit protein which polymerizes to form the filaments of bacterial flagella. The sequence is that of Flagellin (fliC) from Salmonella dublin.